Consider the following 637-residue polypeptide: Pyrethroid hydrolase (637 aa).

It catalyses the reaction (-)-trans-permethrin + H2O = (3-phenoxyphenyl)methanol + (1S,3R)-3-(2,2-dichlorovinyl)-2,2-dimethylcyclopropanecarboxylate + H(+). With respect to regulation, inhibited by Hg(2+), Ag(+) and rho-chloromercuribenzoate. Its function is as follows. Catalyzes the hydrolysis of pyrethroids pesticides. Hydrolyzes cis-permethrin at approximately equal rate to trans-permethrin. This chain is Pyrethroid hydrolase (estP), found in Klebsiella sp.